The chain runs to 128 residues: Protein ripply2 (128 aa).

Residues 1-63 (MENAGGAEGT…HAAEAMPDGP (63 aa)) form a disordered region. Residues 9 to 22 (GTESGAAACAATDG) show a composition bias toward low complexity. Residues 37 to 40 (WRPW) carry the WRPW motif motif. The tract at residues 77–112 (HPVRLFWPKSKCYDYLYQEAEALLKNFPIQATISFY) is ripply homology domain.

This sequence belongs to the ripply family.

The protein resides in the nucleus. Plays a role in somitogenesis. Required for somite segregation and establishment of rostrocaudal polarity in somites. This chain is Protein ripply2 (RIPPLY2), found in Homo sapiens (Human).